The sequence spans 282 residues: Proteasome subunit beta (282 aa).

A propeptide spans 1-54 (MGSHRDLPAGMVNHIFTNSGISSFTEFVGSYAPDLLPGRNETLAAPVGDRIPHA) (removed in mature form; by autocatalysis). Thr55 serves as the catalytic Nucleophile.

The protein belongs to the peptidase T1B family. In terms of assembly, the 20S proteasome core is composed of 14 alpha and 14 beta subunits that assemble into four stacked heptameric rings, resulting in a barrel-shaped structure. The two inner rings, each composed of seven catalytic beta subunits, are sandwiched by two outer rings, each composed of seven alpha subunits. The catalytic chamber with the active sites is on the inside of the barrel. Has a gated structure, the ends of the cylinder being occluded by the N-termini of the alpha-subunits. Is capped by the proteasome-associated ATPase, ARC.

The protein localises to the cytoplasm. It catalyses the reaction Cleavage of peptide bonds with very broad specificity.. The protein operates within protein degradation; proteasomal Pup-dependent pathway. Its activity is regulated as follows. The formation of the proteasomal ATPase ARC-20S proteasome complex, likely via the docking of the C-termini of ARC into the intersubunit pockets in the alpha-rings, may trigger opening of the gate for substrate entry. Interconversion between the open-gate and close-gate conformations leads to a dynamic regulation of the 20S proteasome proteolysis activity. In terms of biological role, component of the proteasome core, a large protease complex with broad specificity involved in protein degradation. The chain is Proteasome subunit beta from Streptosporangium roseum (strain ATCC 12428 / DSM 43021 / JCM 3005 / KCTC 9067 / NCIMB 10171 / NRRL 2505 / NI 9100).